Consider the following 116-residue polypeptide: Endoribonuclease EndoA (116 aa).

The protein belongs to the PemK/MazF family. As to quaternary structure, homodimer. Forms a complex with antitoxin EndoAI in which the toxin activity is inhibited. One dimer binds a ssRNA substrate, forms a heterohexamer composed of alternating toxin and antitoxin homodimers which inhibits the endoribonuclease activity. Antitoxin prevents RNA binding to the endoribonuclease.

Functionally, toxic component of a type II toxin-antitoxin (TA) system. Specific for 5'-UACAU-3' sequences, cleaving after the first U. Yields cleavage products with 3' phosphate and 5' hydroxyl groups. Cannot digest substrate with a UUdUACAUAA cleavage site. Overexpression is toxic for cell growth (shown in E.coli), probably by inhibiting protein synthesis through the cleavage of single-stranded RNA. The toxicity is reversed by the antitoxin EndoAI. Toxin activity cannot be inhibited by MazE from E.coli. The EndoA-EndoAI complex does not seem to bind its own promoter. The sequence is that of Endoribonuclease EndoA from Bacillus subtilis (strain 168).